Here is a 409-residue protein sequence, read N- to C-terminus: Arginine deiminase (409 aa).

Cys399 functions as the Amidino-cysteine intermediate in the catalytic mechanism.

This sequence belongs to the arginine deiminase family.

It localises to the cytoplasm. It carries out the reaction L-arginine + H2O = L-citrulline + NH4(+). The protein operates within amino-acid degradation; L-arginine degradation via ADI pathway; carbamoyl phosphate from L-arginine: step 1/2. The polypeptide is Arginine deiminase (Streptococcus pneumoniae (strain 70585)).